A 321-amino-acid polypeptide reads, in one-letter code: Lipoyl synthase (321 aa).

Residues Cys68, Cys73, Cys79, Cys94, Cys98, Cys101, and Ser308 each coordinate [4Fe-4S] cluster. The Radical SAM core domain maps to 80–297 (FNHGTATFMI…KAEAIAMGFT (218 aa)).

It belongs to the radical SAM superfamily. Lipoyl synthase family. Requires [4Fe-4S] cluster as cofactor.

It is found in the cytoplasm. The enzyme catalyses [[Fe-S] cluster scaffold protein carrying a second [4Fe-4S](2+) cluster] + N(6)-octanoyl-L-lysyl-[protein] + 2 oxidized [2Fe-2S]-[ferredoxin] + 2 S-adenosyl-L-methionine + 4 H(+) = [[Fe-S] cluster scaffold protein] + N(6)-[(R)-dihydrolipoyl]-L-lysyl-[protein] + 4 Fe(3+) + 2 hydrogen sulfide + 2 5'-deoxyadenosine + 2 L-methionine + 2 reduced [2Fe-2S]-[ferredoxin]. It participates in protein modification; protein lipoylation via endogenous pathway; protein N(6)-(lipoyl)lysine from octanoyl-[acyl-carrier-protein]: step 2/2. Functionally, catalyzes the radical-mediated insertion of two sulfur atoms into the C-6 and C-8 positions of the octanoyl moiety bound to the lipoyl domains of lipoate-dependent enzymes, thereby converting the octanoylated domains into lipoylated derivatives. This chain is Lipoyl synthase, found in Pectobacterium carotovorum subsp. carotovorum (strain PC1).